Here is a 283-residue protein sequence, read N- to C-terminus: UPF0273 protein STK_18300 (283 aa).

In terms of domain architecture, KaiC spans Leu-4–Glu-249. An ATP-binding site is contributed by Gly-31–Ser-38. The segment at Met-261–Glu-283 is disordered. Residues Glu-267–Glu-283 are compositionally biased toward acidic residues.

It belongs to the UPF0273 family.

In Sulfurisphaera tokodaii (strain DSM 16993 / JCM 10545 / NBRC 100140 / 7) (Sulfolobus tokodaii), this protein is UPF0273 protein STK_18300.